Here is a 228-residue protein sequence, read N- to C-terminus: ATP-dependent dethiobiotin synthetase BioD (228 aa).

13–18 (DIGKTF) serves as a coordination point for ATP. A Mg(2+)-binding site is contributed by T17. K38 is a catalytic residue. Position 42 (S42) interacts with substrate. ATP is bound by residues D55, 116-119 (EGSG), 179-180 (NK), and 208-210 (PKI). Positions 55 and 116 each coordinate Mg(2+).

This sequence belongs to the dethiobiotin synthetase family. Homodimer. It depends on Mg(2+) as a cofactor.

It is found in the cytoplasm. It carries out the reaction (7R,8S)-7,8-diammoniononanoate + CO2 + ATP = (4R,5S)-dethiobiotin + ADP + phosphate + 3 H(+). The protein operates within cofactor biosynthesis; biotin biosynthesis; biotin from 7,8-diaminononanoate: step 1/2. Catalyzes a mechanistically unusual reaction, the ATP-dependent insertion of CO2 between the N7 and N8 nitrogen atoms of 7,8-diaminopelargonic acid (DAPA, also called 7,8-diammoniononanoate) to form a ureido ring. This Clostridium perfringens (strain ATCC 13124 / DSM 756 / JCM 1290 / NCIMB 6125 / NCTC 8237 / Type A) protein is ATP-dependent dethiobiotin synthetase BioD.